The following is a 632-amino-acid chain: Sodium- and chloride-dependent GABA transporter 3 (632 aa).

The interval 1-41 is disordered; sequence MTAEKALPLGNGKAAEEARESEAPGGGCSSGGAAPARHPRV. The Cytoplasmic portion of the chain corresponds to 1-58; the sequence is MTAEKALPLGNGKAAEEARESEAPGGGCSSGGAAPARHPRVKRDKAVHERGHWNNKVE. Ser21 bears the Phosphoserine mark. 3 helical membrane-spanning segments follow: residues 59–79, 87–106, and 131–151; these read FVLSVAGEIIGLGNVWRFPYL, AFLIPYVVFFICCGIPVFFL, and GIGYATQVIEAHLNVYYIIIL. At 152–225 the chain is on the extracellular side; sequence AWAIFYLSNC…DGIEHIGNLR (74 aa). N-linked (GlcNAc...) asparagine glycosylation is found at Asn187, Asn190, and Asn198. The next 9 membrane-spanning stretches (helical) occupy residues 226 to 244, 253 to 270, 306 to 323, 335 to 356, 389 to 408, 438 to 456, 473 to 493, 514 to 533, and 553 to 571; these read WELALCLLAAWTICYFCIW, VVYVTATFPYIMLLILLI, IFFSYAICLGCLTALGSY, IMLCCLNSGTSFVAGFAIFSVL, MPLSPLWATLFFMMLIFLGL, LLILALSVISYFLGLVMLT, GMCLLFVAIFECICIGWVYGS, WCWMIMTPGICAGIFIFFLI, and IGWLMALSSMLCIPLWICI. The Cytoplasmic segment spans residues 572-632; that stretch reads TVWKTEGTLP…AAITEKETHF (61 aa).

This sequence belongs to the sodium:neurotransmitter symporter (SNF) (TC 2.A.22) family. SLC6A11 subfamily. In terms of tissue distribution, widespread distribution in the brain.

It is found in the cell membrane. It catalyses the reaction 4-aminobutanoate(out) + chloride(out) + 2 Na(+)(out) = 4-aminobutanoate(in) + chloride(in) + 2 Na(+)(in). It carries out the reaction taurine(out) + chloride(out) + 2 Na(+)(out) = taurine(in) + chloride(in) + 2 Na(+)(in). The enzyme catalyses beta-alanine(out) + chloride(out) + 2 Na(+)(out) = beta-alanine(in) + chloride(in) + 2 Na(+)(in). The catalysed reaction is hypotaurine(out) + chloride(out) + 2 Na(+)(out) = hypotaurine(in) + chloride(in) + 2 Na(+)(in). With respect to regulation, GABA transport is inhibited by SNAP-5114. Its function is as follows. Mediates sodium- and chloride-dependent transport of gamma-aminobutyric acid (GABA). Can also mediate transport of beta-alanine and to a lower extent that of taurine and hypotaurine. This Homo sapiens (Human) protein is Sodium- and chloride-dependent GABA transporter 3 (SLC6A11).